Here is a 420-residue protein sequence, read N- to C-terminus: Dihydrolipoyllysine-residue succinyltransferase component of 2-oxoglutarate dehydrogenase complex (420 aa).

The 76-residue stretch at 3–78 (KINILVPDLP…ISQQTLGEIN (76 aa)) folds into the Lipoyl-binding domain. At lysine 44 the chain carries N6-lipoyllysine. Active-site residues include histidine 391 and aspartate 395.

The protein belongs to the 2-oxoacid dehydrogenase family. As to quaternary structure, forms a 24-polypeptide structural core with octahedral symmetry. Part of the 2-oxoglutarate dehydrogenase (OGDH) complex composed of E1 (2-oxoglutarate dehydrogenase), E2 (dihydrolipoamide succinyltransferase) and E3 (dihydrolipoamide dehydrogenase); the complex contains multiple copies of the three enzymatic components (E1, E2 and E3). (R)-lipoate is required as a cofactor.

The catalysed reaction is N(6)-[(R)-dihydrolipoyl]-L-lysyl-[protein] + succinyl-CoA = N(6)-[(R)-S(8)-succinyldihydrolipoyl]-L-lysyl-[protein] + CoA. It functions in the pathway amino-acid degradation; L-lysine degradation via saccharopine pathway; glutaryl-CoA from L-lysine: step 6/6. In terms of biological role, E2 component of the 2-oxoglutarate dehydrogenase (OGDH) complex which catalyzes the second step in the conversion of 2-oxoglutarate to succinyl-CoA and CO(2). The protein is Dihydrolipoyllysine-residue succinyltransferase component of 2-oxoglutarate dehydrogenase complex (sucB) of Buchnera aphidicola subsp. Acyrthosiphon pisum (strain APS) (Acyrthosiphon pisum symbiotic bacterium).